Reading from the N-terminus, the 99-residue chain is MSPTSFFLLTMLLVLVTETAAKRPRERFSQAIEEFSSESSEANSPKSIVHEEVYEEKKFKRNMVNGEDGEDSKRASAGEIERSYLRKKEKQRFAQEMDK.

A signal peptide spans Met-1 to Ala-21.

The protein belongs to the SVP2/SVP5/SVP6 family. In terms of tissue distribution, testis.

It localises to the secreted. It is found in the extracellular space. This Mus musculus (Mouse) protein is Seminal vesicle secretory protein 6 (Svs6).